The primary structure comprises 270 residues: Myelin protein zero-like protein 1 (270 aa).

Residues 1 to 35 (MAEAVGAVALIAAPARRRWLWSVLAAMLGLLTARI) form the signal peptide. The Ig-like V-type domain maps to 36–151 (SALEVHTPKE…DIVVRPGHIR (116 aa)). Residues 36–162 (SALEVHTPKE…HVVEIDNLLV (127 aa)) are Extracellular-facing. 2 N-linked (GlcNAc...) asparagine glycosylation sites follow: Asn-50 and Asn-130. Cysteines 58 and 135 form a disulfide. Residues 163–183 (FLVWVVVGTVTAVVLGLTLLI) form a helical membrane-spanning segment. Residues 184–270 (SLVLVVLYRR…SVVYADIRKD (87 aa)) lie on the Cytoplasmic side of the membrane. The tract at residues 201–257 (TGCSTSERLSPVKQAPRKCPSDTEGLVKSPPSAGSHQGPVIYAQLDHSGGHHSGKIN) is disordered. Ser-204, Ser-206, Ser-210, and Ser-221 each carry phosphoserine. The ITIM motif 1 signature appears at 240-245 (VIYAQL). A Phosphotyrosine modification is found at Tyr-242. Position 261 is a phosphoserine (Ser-261). The ITIM motif 2 signature appears at 262–267 (VVYADI). Tyr-264 carries the post-translational modification Phosphotyrosine.

This sequence belongs to the myelin P0 protein family. In terms of assembly, interacts with phosphorylated PTPN11/SHP-2. Post-translationally, phosphorylated on tyrosine residues upon stimulation with pervanadate and concanavalin-A (ConA). Phosphorylation at Tyr-242 and Tyr-264 is required for interaction with PTPN11/SHP-2. Dephosphorylated by PTPN11/SHP-2 (in vitro).

It localises to the membrane. Cell surface receptor, which is involved in signal transduction processes. Recruits PTPN11/SHP-2 to the cell membrane and is a putative substrate of PTPN11/SHP-2. Is a major receptor for concanavalin-A (ConA) and is involved in cellular signaling induced by ConA, which probably includes Src family tyrosine-protein kinases. Isoform 2 seems to have a dominant negative role; it blocks tyrosine phosphorylation of MPZL1 induced by ConA. Isoform 1, but not isoform 2, may be involved in regulation of integrin-mediated cell motility. This is Myelin protein zero-like protein 1 (Mpzl1) from Mus musculus (Mouse).